A 184-amino-acid chain; its full sequence is Protein PLANT CADMIUM RESISTANCE 5 (184 aa).

Residues 1-26 (MGRPVGQTNQAQPSVQHTASPSNKVS) show a composition bias toward polar residues. The tract at residues 1–33 (MGRPVGQTNQAQPSVQHTASPSNKVSHNGGIGK) is disordered. The helical transmembrane segment at 94–114 (AGLLYGALFFTGASFVYSYMF) threads the bilayer.

Belongs to the cornifelin family.

The protein localises to the membrane. In terms of biological role, may be involved in heavy metals transport. This Arabidopsis thaliana (Mouse-ear cress) protein is Protein PLANT CADMIUM RESISTANCE 5 (PCR5).